We begin with the raw amino-acid sequence, 59 residues long: Large ribosomal subunit protein uL30 (59 aa).

It belongs to the universal ribosomal protein uL30 family. In terms of assembly, part of the 50S ribosomal subunit.

The polypeptide is Large ribosomal subunit protein uL30 (Listeria innocua serovar 6a (strain ATCC BAA-680 / CLIP 11262)).